The primary structure comprises 79 residues: Kunitz-type serine protease inhibitor homolog dendrotoxin K (79 aa).

In terms of domain architecture, BPTI/Kunitz inhibitor spans 27 to 77; that stretch reads CKLPLRIGPCKRKIPSFYYKWKAKQCLPFDYSGCGGNANRFKTIEECRRTC. Intrachain disulfides connect Cys-27–Cys-77, Cys-36–Cys-60, and Cys-52–Cys-73.

It belongs to the venom Kunitz-type family. In terms of tissue distribution, expressed by the venom gland.

It is found in the secreted. In terms of biological role, serine protease inhibitor homolog that selectively blocks voltage-gated potassium channels homooligomer Kv1.1/KCNA1 (EC(50)=0.6 nM) and Kv1.1-containing heterooligomer. This is Kunitz-type serine protease inhibitor homolog dendrotoxin K from Dendroaspis polylepis polylepis (Black mamba).